The following is a 178-amino-acid chain: Ribulose bisphosphate carboxylase small subunit, chloroplastic (178 aa).

A chloroplast-targeting transit peptide spans 1-54 (MALISSAAVTTINRAPVQANLATPFTGLKSSAGFPVTKKNNDITSITSNGSRVN).

It belongs to the RuBisCO small chain family. As to quaternary structure, heterohexadecamer of 8 large and 8 small subunits.

It is found in the plastid. Its subcellular location is the chloroplast. In terms of biological role, ruBisCO catalyzes two reactions: the carboxylation of D-ribulose 1,5-bisphosphate, the primary event in carbon dioxide fixation, as well as the oxidative fragmentation of the pentose substrate. Both reactions occur simultaneously and in competition at the same active site. Although the small subunit is not catalytic it is essential for maximal activity. This Trifolium repens (Creeping white clover) protein is Ribulose bisphosphate carboxylase small subunit, chloroplastic.